The following is a 183-amino-acid chain: Large ribosomal subunit protein uL22 (183 aa).

Belongs to the universal ribosomal protein uL22 family.

The protein is Large ribosomal subunit protein uL22 (RPL17) of Podocoryna carnea (Hydrozoan).